The chain runs to 411 residues: LL-diaminopimelate aminotransferase (411 aa).

Substrate is bound by residues Tyr-16 and Gly-43. Residues Tyr-73, 109–110 (AK), Tyr-133, Asn-188, Tyr-219, and 247–249 (SFS) contribute to the pyridoxal 5'-phosphate site. Substrate-binding residues include Lys-110, Tyr-133, and Asn-188. The residue at position 250 (Lys-250) is an N6-(pyridoxal phosphate)lysine. The pyridoxal 5'-phosphate site is built by Arg-258 and Asn-293. The substrate site is built by Asn-293 and Arg-389.

It belongs to the class-I pyridoxal-phosphate-dependent aminotransferase family. LL-diaminopimelate aminotransferase subfamily. Homodimer. Pyridoxal 5'-phosphate serves as cofactor.

The enzyme catalyses (2S,6S)-2,6-diaminopimelate + 2-oxoglutarate = (S)-2,3,4,5-tetrahydrodipicolinate + L-glutamate + H2O + H(+). It functions in the pathway amino-acid biosynthesis; L-lysine biosynthesis via DAP pathway; LL-2,6-diaminopimelate from (S)-tetrahydrodipicolinate (aminotransferase route): step 1/1. Involved in the synthesis of meso-diaminopimelate (m-DAP or DL-DAP), required for both lysine and peptidoglycan biosynthesis. Catalyzes the direct conversion of tetrahydrodipicolinate to LL-diaminopimelate. This chain is LL-diaminopimelate aminotransferase, found in Methanobrevibacter smithii (strain ATCC 35061 / DSM 861 / OCM 144 / PS).